We begin with the raw amino-acid sequence, 669 residues long: Acyl-coenzyme A oxidase 1 (669 aa).

The FAD site is built by T152 and G191. Catalysis depends on E434, which acts as the Proton acceptor. A Phosphotyrosine modification is found at Y544. A Phosphoserine modification is found at S551. Residues 667-669 carry the Microbody targeting signal motif; the sequence is AHL.

The protein belongs to the acyl-CoA oxidase family. Homodimer. The cofactor is FAD. In terms of tissue distribution, expressed in glia.

The protein resides in the peroxisome. It localises to the nucleus. It catalyses the reaction a 2,3-saturated acyl-CoA + O2 = a (2E)-enoyl-CoA + H2O2. It functions in the pathway lipid metabolism; peroxisomal fatty acid beta-oxidation. Its function is as follows. Catalyzes the desaturation of acyl-CoAs to 2-trans-enoyl-CoAs. First enzyme of the fatty acid beta-oxidation pathway. The protein is Acyl-coenzyme A oxidase 1 of Drosophila melanogaster (Fruit fly).